Here is a 220-residue protein sequence, read N- to C-terminus: 3-dehydroquinate dehydratase (220 aa).

3-dehydroquinate-binding positions include 29-31 (EFR) and R56. The active-site Proton donor/acceptor is the H116. Catalysis depends on K142, which acts as the Schiff-base intermediate with substrate. Residues R180, S200, and Q204 each contribute to the 3-dehydroquinate site.

Belongs to the type-I 3-dehydroquinase family. Homodimer.

The catalysed reaction is 3-dehydroquinate = 3-dehydroshikimate + H2O. It participates in metabolic intermediate biosynthesis; chorismate biosynthesis; chorismate from D-erythrose 4-phosphate and phosphoenolpyruvate: step 3/7. Its function is as follows. Involved in the third step of the chorismate pathway, which leads to the biosynthesis of aromatic amino acids. Catalyzes the cis-dehydration of 3-dehydroquinate (DHQ) and introduces the first double bond of the aromatic ring to yield 3-dehydroshikimate. This chain is 3-dehydroquinate dehydratase, found in Methanocaldococcus jannaschii (strain ATCC 43067 / DSM 2661 / JAL-1 / JCM 10045 / NBRC 100440) (Methanococcus jannaschii).